The primary structure comprises 468 residues: ATP synthase subunit beta (468 aa).

G155–T162 lines the ATP pocket.

The protein belongs to the ATPase alpha/beta chains family. In terms of assembly, F-type ATPases have 2 components, CF(1) - the catalytic core - and CF(0) - the membrane proton channel. CF(1) has five subunits: alpha(3), beta(3), gamma(1), delta(1), epsilon(1). CF(0) has three main subunits: a(1), b(2) and c(9-12). The alpha and beta chains form an alternating ring which encloses part of the gamma chain. CF(1) is attached to CF(0) by a central stalk formed by the gamma and epsilon chains, while a peripheral stalk is formed by the delta and b chains.

Its subcellular location is the cell membrane. It catalyses the reaction ATP + H2O + 4 H(+)(in) = ADP + phosphate + 5 H(+)(out). Functionally, produces ATP from ADP in the presence of a proton gradient across the membrane. The catalytic sites are hosted primarily by the beta subunits. The sequence is that of ATP synthase subunit beta from Bacillus cereus (strain ATCC 10987 / NRS 248).